We begin with the raw amino-acid sequence, 478 residues long: Oxidative stress-induced growth inhibitor 1 (478 aa).

S12 is subject to Phosphoserine.

This sequence belongs to the OKL38 family. NADPH is required as a cofactor.

The protein resides in the midbody. Its function is as follows. Monooxygenase catalytic activity. Involved in regulation of cytokinesis; promotes RHOA activity, probably acting locally at the midbody in late cytokinesis. Monooxygenase activity is involved in stabilizing transient structures between daughter cells, termed intercellular bridges, before abscission. Regulates differentiation and proliferation through the regulation of cell death. The sequence is that of Oxidative stress-induced growth inhibitor 1 from Mus musculus (Mouse).